Reading from the N-terminus, the 481-residue chain is Cysteine--tRNA ligase (481 aa).

Cys-29 is a Zn(2+) binding site. The 'HIGH' region signature appears at 31-41 (PTVYDYSHLGH). The Zn(2+) site is built by Cys-210, His-235, and Glu-239. Residues 272-276 (KMSKS) carry the 'KMSKS' region motif. An ATP-binding site is contributed by Lys-275.

This sequence belongs to the class-I aminoacyl-tRNA synthetase family. In terms of assembly, monomer. Zn(2+) serves as cofactor.

It localises to the cytoplasm. It catalyses the reaction tRNA(Cys) + L-cysteine + ATP = L-cysteinyl-tRNA(Cys) + AMP + diphosphate. In Anaeromyxobacter sp. (strain K), this protein is Cysteine--tRNA ligase.